Reading from the N-terminus, the 435-residue chain is Serine/threonine-protein kinase ssn3 (435 aa).

A Protein kinase domain is found at 49 to 377 (YRIVGFISSG…AREALEHPYF (329 aa)). ATP is bound by residues 55-63 (ISSGTYGRV) and Lys79. The Proton acceptor role is filled by Asp181. The segment covering 398–407 (RRVTQDDNDI) has biased composition (basic and acidic residues). The interval 398 to 435 (RRVTQDDNDIRSGSLPGTKRSGLPDDSLMGRASKRIKE) is disordered.

It belongs to the protein kinase superfamily. CMGC Ser/Thr protein kinase family. CDC2/CDKX subfamily. In terms of assembly, component of the srb8-11 complex, a regulatory module of the Mediator complex. Requires Mg(2+) as cofactor.

It is found in the nucleus. It carries out the reaction L-seryl-[protein] + ATP = O-phospho-L-seryl-[protein] + ADP + H(+). It catalyses the reaction L-threonyl-[protein] + ATP = O-phospho-L-threonyl-[protein] + ADP + H(+). The catalysed reaction is [DNA-directed RNA polymerase] + ATP = phospho-[DNA-directed RNA polymerase] + ADP + H(+). Component of the srb8-11 complex. The srb8-11 complex is a regulatory module of the Mediator complex which is itself involved in regulation of basal and activated RNA polymerase II-dependent transcription. The srb8-11 complex may be involved in the transcriptional repression of a subset of genes regulated by Mediator. It may inhibit the association of the Mediator complex with RNA polymerase II to form the holoenzyme complex. The srb8-11 complex phosphorylates the C-terminal domain (CTD) of the largest subunit of RNA polymerase II. This chain is Serine/threonine-protein kinase ssn3 (ssn3), found in Aspergillus terreus (strain NIH 2624 / FGSC A1156).